Consider the following 464-residue polypeptide: Fumarate hydratase class II (464 aa).

Residues 100–102 (SGT), 131–134 (HPND), 141–143 (SSN), and Thr-189 contribute to the substrate site. His-190 (proton donor/acceptor) is an active-site residue. The active site involves Ser-320. Residues Ser-321 and 326–328 (KVN) contribute to the substrate site.

This sequence belongs to the class-II fumarase/aspartase family. Fumarase subfamily. As to quaternary structure, homotetramer.

Its subcellular location is the cytoplasm. It catalyses the reaction (S)-malate = fumarate + H2O. Its pathway is carbohydrate metabolism; tricarboxylic acid cycle; (S)-malate from fumarate: step 1/1. In terms of biological role, involved in the TCA cycle. Catalyzes the stereospecific interconversion of fumarate to L-malate. The sequence is that of Fumarate hydratase class II from Deinococcus radiodurans (strain ATCC 13939 / DSM 20539 / JCM 16871 / CCUG 27074 / LMG 4051 / NBRC 15346 / NCIMB 9279 / VKM B-1422 / R1).